We begin with the raw amino-acid sequence, 144 residues long: Deoxyuridine 5'-triphosphate nucleotidohydrolase (144 aa).

Residues serine 66, arginine 133, phenylalanine 138, and glycine 139 each contribute to the dUMP site.

Belongs to the dUTPase family. As to quaternary structure, homotrimer. Mg(2+) serves as cofactor.

It carries out the reaction dUTP + H2O = dUMP + diphosphate + H(+). It functions in the pathway pyrimidine metabolism; dUMP biosynthesis; dUMP from dCTP (dUTP route): step 2/2. Involved in nucleotide metabolism via production of dUMP, the immediate precursor of thymidine nucleotides, and decreases the intracellular concentration of dUTP so that uracil cannot be incorporated into DNA. The protein is Deoxyuridine 5'-triphosphate nucleotidohydrolase (DUT1) of Encephalitozoon cuniculi (strain GB-M1) (Microsporidian parasite).